We begin with the raw amino-acid sequence, 950 residues long: Translation initiation factor IF-2 (950 aa).

Disordered stretches follow at residues 57 to 254 (LAER…AVVI) and 304 to 328 (DVSR…KSLS). Composition is skewed to low complexity over residues 101 to 131 (AEPQ…EPAA) and 139 to 169 (AAPL…QPAA). The segment covering 170-215 (PAAPPAPTAQPSAPPPAAAQPRPPQPSAPSRPPPPGYRPAPPPGAR) has biased composition (pro residues). A compositionally biased stretch (low complexity) spans 216-233 (PPVSAAPGAPGQPGAAGQ). One can recognise a tr-type G domain in the interval 449–618 (IRPPVVTVMG…ALQSEVLELK (170 aa)). Positions 458-465 (GHVDHGKT) are G1. 458–465 (GHVDHGKT) serves as a coordination point for GTP. Positions 483 to 487 (GITQH) are G2. The G3 stretch occupies residues 504 to 507 (DTPG). GTP contacts are provided by residues 504–508 (DTPGH) and 558–561 (NKVD). The tract at residues 558 to 561 (NKVD) is G4. The interval 594–596 (SAR) is G5.

It belongs to the TRAFAC class translation factor GTPase superfamily. Classic translation factor GTPase family. IF-2 subfamily.

It is found in the cytoplasm. One of the essential components for the initiation of protein synthesis. Protects formylmethionyl-tRNA from spontaneous hydrolysis and promotes its binding to the 30S ribosomal subunits. Also involved in the hydrolysis of GTP during the formation of the 70S ribosomal complex. The protein is Translation initiation factor IF-2 of Anaeromyxobacter dehalogenans (strain 2CP-C).